A 1128-amino-acid polypeptide reads, in one-letter code: Large proline-rich protein BAG6 (1128 aa).

M1 carries the N-acetylmethionine modification. The region spanning 17-92 (LEVLVKTLDS…HLVERAPPQT (76 aa)) is the Ubiquitin-like domain. Disordered stretches follow at residues 87–126 (RAPPQTQLPSGASSGTGSASATHGGGPPPGTRGPGASVHD), 185–267 (CRGG…NHPS), 380–435 (VTMT…AASH), 456–523 (IQDS…ALPG), and 555–598 (PGMA…SASD). The span at 95–108 (PSGASSGTGSASAT) shows a compositional bias: low complexity. Residue S96 is modified to Phosphoserine. At T117 the chain carries Phosphothreonine. A compositionally biased stretch (polar residues) spans 189–201 (SQAQHSQPPSQMP). Repeat unit 1 spans residues 236 to 265 (RASAQSPGLSPSGPAPAGPTPAPETNAPNH). Residues 236-630 (RASAQSPGLS…MTSPTITVAM (395 aa)) form a 4 X 29 AA approximate repeats region. The span at 238–247 (SAQSPGLSPS) shows a compositional bias: low complexity. Pro residues-rich tracts occupy residues 248-257 (GPAPAGPTPA) and 388-402 (RPPPTPNAEAPPPGP). The span at 403-412 (GQASSLAPSS) shows a compositional bias: low complexity. Copy 2 of the repeat occupies 410–438 (PSSTTVESSTEGAPPPGPAPPPAASHPRV). Composition is skewed to pro residues over residues 422–433 (APPPGPAPPPAA) and 502–515 (PTPPQSRPSHPGGP). A compositionally biased stretch (low complexity) spans 564–581 (ATASASAGTTNTATTAGP). Repeat copies occupy residues 569-596 (SAGTTNTATTAGPAPGGPAQPPPPQPSA) and 602-630 (SQLLGNLLGPAGPGAGGPGMTSPTITVAM). Pro residues predominate over residues 583–594 (PGGPAQPPPPQP). Disordered stretches follow at residues 648–689 (QTAA…GLGP) and 939–1128 (VGDP…AEDP). Residues 652–677 (PPAPPPPPPPPPPAPEQQTAPPPGSP) are compositionally biased toward pro residues. Residues 678 to 688 (PGGAGSPGGLG) are compositionally biased toward gly residues. Phosphoserine occurs at positions 960 and 969. Positions 999–1016 (AAAETEPWAAAVPPEWVP) are enriched in low complexity. Residues 1006-1036 (WAAAVPPEWVPIIQQDIQSQRKVKPQPPLSD) are required for interaction with GET4. Residues 1008–1050 (AAVPPEWVPIIQQDIQSQRKVKPQPPLSDAYLSGMPAKRRKTM) carry the Nuclear localization site motif. The tract at residues 1018–1128 (IQQDIQSQRK…NAHRAFAEDP (111 aa)) is sufficient for the delivery of client proteins to the endoplasmic reticulum. The residue at position 1049 (T1049) is a Phosphothreonine. Residues 1054–1111 (GPQLLLSEAVSRAAKAAGARPLTSPESLSRDLEAPEVQESYRQQLRADIQKRLQEDPN) are BAG-similar domain, required and sufficient for interaction with UBL4A. Positions 1062–1072 (AVSRAAKAAGA) are enriched in low complexity. Phosphoserine occurs at positions 1077 and 1113.

As to quaternary structure, component of the BAG6/BAT3 complex, also named BAT3 complex, at least composed of BAG6, UBL4A and GET4/TRC35. Interacts with GET4; the interaction is direct and localizes BAG6 in the cytosol. Interacts with UBL4A; the interaction is direct and required for UBL4A protein stability. Interacts with AIFM1. Interacts with HSPA2. Interacts with CTCFL. Interacts with p300/EP300. Interacts (via ubiquitin-like domain) with RNF126; required for BAG6-dependent ubiquitination of proteins mislocalized to the cytosol. Interacts (via ubiquitin-like domain) with SGTA; SGTA competes with RNF126 by binding the same region of BAG6, thereby promoting deubiquitination of BAG6-target proteins and rescuing them from degradation. Interacts with ricin A chain. Interacts with VCP and AMFR; both form the VCP/p97-AMFR/gp78 complex. Interacts with SYVN1. Interacts with USP13; the interaction is direct and may mediate UBL4A deubiquitination. Interacts with ZFAND2B. Interacts with KPNA2. Interacts with UBQLN4. In terms of processing, ricin can induce a cleavage by the caspase CASP3. The released C-terminal peptide induces apoptosis.

It localises to the cytoplasm. The protein resides in the cytosol. The protein localises to the nucleus. It is found in the secreted. Its subcellular location is the extracellular exosome. In terms of biological role, ATP-independent molecular chaperone preventing the aggregation of misfolded and hydrophobic patches-containing proteins. Functions as part of a cytosolic protein quality control complex, the BAG6/BAT3 complex, which maintains these client proteins in a soluble state and participates in their proper delivery to the endoplasmic reticulum or alternatively can promote their sorting to the proteasome where they undergo degradation. The BAG6/BAT3 complex is involved in the post-translational delivery of tail-anchored/type II transmembrane proteins to the endoplasmic reticulum membrane. Recruited to ribosomes, it interacts with the transmembrane region of newly synthesized tail-anchored proteins and together with SGTA and ASNA1 mediates their delivery to the endoplasmic reticulum. Client proteins that cannot be properly delivered to the endoplasmic reticulum are ubiquitinated by RNF126, an E3 ubiquitin-protein ligase associated with BAG6 and are sorted to the proteasome. SGTA which prevents the recruitment of RNF126 to BAG6 may negatively regulate the ubiquitination and the proteasomal degradation of client proteins. Similarly, the BAG6/BAT3 complex also functions as a sorting platform for proteins of the secretory pathway that are mislocalized to the cytosol either delivering them to the proteasome for degradation or to the endoplasmic reticulum. The BAG6/BAT3 complex also plays a role in the endoplasmic reticulum-associated degradation (ERAD), a quality control mechanism that eliminates unwanted proteins of the endoplasmic reticulum through their retrotranslocation to the cytosol and their targeting to the proteasome. It maintains these retrotranslocated proteins in an unfolded yet soluble state condition in the cytosol to ensure their proper delivery to the proteasome. BAG6 is also required for selective ubiquitin-mediated degradation of defective nascent chain polypeptides by the proteasome. In this context, it may participate in the production of antigenic peptides and play a role in antigen presentation in immune response. BAG6 is also involved in endoplasmic reticulum stress-induced pre-emptive quality control, a mechanism that selectively attenuates the translocation of newly synthesized proteins into the endoplasmic reticulum and reroutes them to the cytosol for proteasomal degradation. BAG6 may ensure the proper degradation of these proteins and thereby protects the endoplasmic reticulum from protein overload upon stress. By inhibiting the polyubiquitination and subsequent proteasomal degradation of HSPA2 it may also play a role in the assembly of the synaptonemal complex during spermatogenesis. Also positively regulates apoptosis by interacting with and stabilizing the proapoptotic factor AIFM1. By controlling the steady-state expression of the IGF1R receptor, indirectly regulates the insulin-like growth factor receptor signaling pathway. Involved in DNA damage-induced apoptosis: following DNA damage, accumulates in the nucleus and forms a complex with p300/EP300, enhancing p300/EP300-mediated p53/TP53 acetylation leading to increase p53/TP53 transcriptional activity. When nuclear, may also act as a component of some chromatin regulator complex that regulates histone 3 'Lys-4' dimethylation (H3K4me2). Its function is as follows. Released extracellularly via exosomes, it is a ligand of the natural killer/NK cells receptor NCR3 and stimulates NK cells cytotoxicity. It may thereby trigger NK cells cytotoxicity against neighboring tumor cells and immature myeloid dendritic cells (DC). Functionally, may mediate ricin-induced apoptosis. The polypeptide is Large proline-rich protein BAG6 (Sus scrofa (Pig)).